Consider the following 432-residue polypeptide: Zinc finger protein 829 (432 aa).

Residues 35–106 (VMFRDVSIDF…DRELTRGLCS (72 aa)) enclose the KRAB domain. A C2H2-type 1 zinc finger spans residues 156–178 (WECKICGKTFNQNSQFIQHQRIH). The segment at 184-206 (YESKEYGKSFSRGSLVTRHQRIH) adopts a C2H2-type 2; degenerate zinc-finger fold. 8 consecutive C2H2-type zinc fingers follow at residues 212 to 234 (YECKECGKAFSCSSYFSQHQRIH), 240 to 262 (YECKECGKAFKYCSNLNDHQRIH), 268 to 290 (YECKVCGKAFTKSSQLFLHLRIH), 296 to 318 (YECKECGKAFTQHSRLIQHQRMH), 324 to 346 (YECKQCGKAFNSASTLTNHHRIH), 352 to 374 (YECEECRKAFIQSSELIQHQRIH), 380 to 402 (YECNECGKAFNKGSNLTRHQRIH), and 408 to 430 (YDCKECGKAFGSRSDLIRHEGIH).

This sequence belongs to the krueppel C2H2-type zinc-finger protein family.

The protein resides in the nucleus. Functionally, may be involved in transcriptional regulation. In Homo sapiens (Human), this protein is Zinc finger protein 829 (ZNF829).